The primary structure comprises 500 residues: NAD(P)H-quinone oxidoreductase chain 4, chloroplastic (500 aa).

Helical transmembrane passes span 4–24 (FPWL…IFFL), 35–55 (YTIF…CYHF), 87–107 (IGPI…AWPV), 113–130 (LFNF…GLFS), 134–154 (LLLF…LLSM), 167–187 (FILY…GIGL), 211–231 (IIFY…IPLH), 242–262 (HYST…YGLV), 272–292 (AHSI…IYAA), 305–325 (IAYS…SITD), 330–350 (GALL…FLAG), 364–384 (MGGI…FSMA), 386–406 (LALP…GIIT), 416–436 (ILIT…SLSM), and 463–483 (FLSI…DFIF).

Belongs to the complex I subunit 4 family.

Its subcellular location is the plastid. The protein localises to the chloroplast thylakoid membrane. It catalyses the reaction a plastoquinone + NADH + (n+1) H(+)(in) = a plastoquinol + NAD(+) + n H(+)(out). The enzyme catalyses a plastoquinone + NADPH + (n+1) H(+)(in) = a plastoquinol + NADP(+) + n H(+)(out). The chain is NAD(P)H-quinone oxidoreductase chain 4, chloroplastic from Coffea arabica (Arabian coffee).